Consider the following 157-residue polypeptide: Crossover junction endodeoxyribonuclease RuvC (157 aa).

Active-site residues include Asp-9, Glu-70, and Asp-142. Mg(2+) is bound by residues Asp-9, Glu-70, and Asp-142.

It belongs to the RuvC family. In terms of assembly, homodimer which binds Holliday junction (HJ) DNA. The HJ becomes 2-fold symmetrical on binding to RuvC with unstacked arms; it has a different conformation from HJ DNA in complex with RuvA. In the full resolvosome a probable DNA-RuvA(4)-RuvB(12)-RuvC(2) complex forms which resolves the HJ. It depends on Mg(2+) as a cofactor.

The protein resides in the cytoplasm. The enzyme catalyses Endonucleolytic cleavage at a junction such as a reciprocal single-stranded crossover between two homologous DNA duplexes (Holliday junction).. Its function is as follows. The RuvA-RuvB-RuvC complex processes Holliday junction (HJ) DNA during genetic recombination and DNA repair. Endonuclease that resolves HJ intermediates. Cleaves cruciform DNA by making single-stranded nicks across the HJ at symmetrical positions within the homologous arms, yielding a 5'-phosphate and a 3'-hydroxyl group; requires a central core of homology in the junction. The consensus cleavage sequence is 5'-(A/T)TT(C/G)-3'. Cleavage occurs on the 3'-side of the TT dinucleotide at the point of strand exchange. HJ branch migration catalyzed by RuvA-RuvB allows RuvC to scan DNA until it finds its consensus sequence, where it cleaves and resolves the cruciform DNA. This chain is Crossover junction endodeoxyribonuclease RuvC, found in Cyanothece sp. (strain PCC 7425 / ATCC 29141).